Consider the following 152-residue polypeptide: MKIILRKDVATLGDAGEVVTVKNGYANNYLIPQGYAIRATEGTLKALETEKKQQARKIELQRTNARELAAKIEQMTLKVLAKAGESGKLFGTVTAGDIAEALKAQGVDIDRRKIHLEAPIKALGKYEADAKLFMDITAKLSIEVEAEGASEE.

It belongs to the bacterial ribosomal protein bL9 family.

Binds to the 23S rRNA. This Chlorobaculum tepidum (strain ATCC 49652 / DSM 12025 / NBRC 103806 / TLS) (Chlorobium tepidum) protein is Large ribosomal subunit protein bL9.